The primary structure comprises 293 residues: Movement protein BC1 (293 aa).

Positions 207–228 (SWASRSTIGPSPSYAGSDQGDA) are disordered. Residues 209–222 (ASRSTIGPSPSYAG) show a composition bias toward polar residues.

It belongs to the begomovirus movement protein BC1 family. In terms of assembly, binds to dimeric supercoiled plasmid DNA. Phosphorylated.

The protein localises to the host cell membrane. It is found in the host microsome membrane. It localises to the host endoplasmic reticulum membrane. Functionally, movement protein involved in the cell-to-cell and systemic transport of viral genomic DNA. Begomoviruses use 2 proteins to transport their DNA from cell to cell. The nuclear shuttle protein (NSP) shuttles it between nucleus and cytoplasm and the movement protein (MP) probably transports the DNA-NSP complex to the cell periphery and facilitates further movement across the cell wall. This chain is Movement protein BC1, found in Tomato golden mosaic virus (strain Yellow vein) (TGMV).